The primary structure comprises 162 residues: ATP synthase subunit b (162 aa).

A helical transmembrane segment spans residues 6–25; it reads TLFTLVTFLVLMLAVGKVAW.

The protein belongs to the ATPase B chain family. As to quaternary structure, F-type ATPases have 2 components, F(1) - the catalytic core - and F(0) - the membrane proton channel. F(1) has five subunits: alpha(3), beta(3), gamma(1), delta(1), epsilon(1). F(0) has three main subunits: a(1), b(2) and c(10-14). The alpha and beta chains form an alternating ring which encloses part of the gamma chain. F(1) is attached to F(0) by a central stalk formed by the gamma and epsilon chains, while a peripheral stalk is formed by the delta and b chains.

The protein resides in the cell membrane. Its function is as follows. F(1)F(0) ATP synthase produces ATP from ADP in the presence of a proton or sodium gradient. F-type ATPases consist of two structural domains, F(1) containing the extramembraneous catalytic core and F(0) containing the membrane proton channel, linked together by a central stalk and a peripheral stalk. During catalysis, ATP synthesis in the catalytic domain of F(1) is coupled via a rotary mechanism of the central stalk subunits to proton translocation. Component of the F(0) channel, it forms part of the peripheral stalk, linking F(1) to F(0). This is ATP synthase subunit b from Lacticaseibacillus casei (strain BL23) (Lactobacillus casei).